A 350-amino-acid polypeptide reads, in one-letter code: 3-dehydroquinate synthase (350 aa).

NAD(+) contacts are provided by residues 106 to 110 (GVIGD), 130 to 131 (TS), Lys-143, and Lys-152. Glu-185, His-246, and His-263 together coordinate Zn(2+).

This sequence belongs to the sugar phosphate cyclases superfamily. Dehydroquinate synthase family. Co(2+) is required as a cofactor. It depends on Zn(2+) as a cofactor. Requires NAD(+) as cofactor.

Its subcellular location is the cytoplasm. The catalysed reaction is 7-phospho-2-dehydro-3-deoxy-D-arabino-heptonate = 3-dehydroquinate + phosphate. Its pathway is metabolic intermediate biosynthesis; chorismate biosynthesis; chorismate from D-erythrose 4-phosphate and phosphoenolpyruvate: step 2/7. Its function is as follows. Catalyzes the conversion of 3-deoxy-D-arabino-heptulosonate 7-phosphate (DAHP) to dehydroquinate (DHQ). The chain is 3-dehydroquinate synthase from Clostridium botulinum (strain Alaska E43 / Type E3).